The following is a 196-amino-acid chain: 7-methyl-GTP pyrophosphatase (196 aa).

The Proton acceptor role is filled by Asp-72.

It belongs to the Maf family. YceF subfamily. Requires a divalent metal cation as cofactor.

It localises to the cytoplasm. The enzyme catalyses N(7)-methyl-GTP + H2O = N(7)-methyl-GMP + diphosphate + H(+). Functionally, nucleoside triphosphate pyrophosphatase that hydrolyzes 7-methyl-GTP (m(7)GTP). May have a dual role in cell division arrest and in preventing the incorporation of modified nucleotides into cellular nucleic acids. This is 7-methyl-GTP pyrophosphatase from Neisseria gonorrhoeae (strain ATCC 700825 / FA 1090).